The following is a 467-amino-acid chain: Sugar transporter ERD6-like 11 (467 aa).

A run of 12 helical transmembrane segments spans residues 26-46 (ITAC…SYGC), 75-95 (FLNV…VILG), 105-125 (FFCV…WLDL), 128-148 (ISLG…IAEI), 155-177 (GAFT…FFGT), 183-203 (VMAV…FFIP), 266-286 (LVVG…GITY), 301-321 (LGSM…LILV), 328-348 (PLLL…GVSF), 359-379 (LIPI…AFGI), 402-422 (IVAL…NFMF), and 428-448 (GTFY…WMLV).

This sequence belongs to the major facilitator superfamily. Sugar transporter (TC 2.A.1.1) family.

It localises to the membrane. Functionally, sugar transporter. The chain is Sugar transporter ERD6-like 11 from Arabidopsis thaliana (Mouse-ear cress).